We begin with the raw amino-acid sequence, 829 residues long: Colorectal mutant cancer protein (829 aa).

3 disordered regions span residues 114–139, 282–320, and 672–700; these read RSELSQSQHEVNEDSRSMDQDQTSVS, TRLQSVQATGPSSPGRLTSTNRPINPSTGELSTSSSSND, and EEQKEQRMRSLSSTSSGSKDKPGKECADA. Positions 123 to 132 are enriched in basic and acidic residues; that stretch reads EVNEDSRSMD. Residues 285–312 are compositionally biased toward polar residues; it reads QSVQATGPSSPGRLTSTNRPINPSTGEL. A compositionally biased stretch (basic and acidic residues) spans 689-698; it reads SKDKPGKECA. A Nuclear localization signal motif is present at residues 766–782; it reads KRANSNLVAAYEKAKKK. A PDZ-binding motif is present at residues 826–829; the sequence is ETSL. A Phosphoserine modification is found at serine 828.

This sequence belongs to the MCC family. As to quaternary structure, interacts with SCRIB (via phosphorylated PDZ-binding motif), EZR, SNX27, NHERF1 and NHERF2. Interacts with CTNNB1; the interaction is enhanced upon Wnt stimulation. Interacts with MYH10. Interacts with CCAR2. Expressed in a variety of tissues.

The protein resides in the cell membrane. The protein localises to the cell projection. It is found in the lamellipodium. Its subcellular location is the nucleus. It localises to the cytoplasm. Functionally, candidate for the putative colorectal tumor suppressor gene located at 5q21. Suppresses cell proliferation and the Wnt/b-catenin pathway in colorectal cancer cells. Inhibits DNA binding of b-catenin/TCF/LEF transcription factors. Involved in cell migration independently of RAC1, CDC42 and p21-activated kinase (PAK) activation. Represses the beta-catenin pathway (canonical Wnt signaling pathway) in a CCAR2-dependent manner by sequestering CCAR2 to the cytoplasm, thereby impairing its ability to inhibit SIRT1 which is involved in the deacetylation and negative regulation of beta-catenin (CTNB1) transcriptional activity. The protein is Colorectal mutant cancer protein (MCC) of Homo sapiens (Human).